Reading from the N-terminus, the 150-residue chain is Urease accessory protein UreE (150 aa).

The protein belongs to the UreE family.

It localises to the cytoplasm. In terms of biological role, involved in urease metallocenter assembly. Binds nickel. Probably functions as a nickel donor during metallocenter assembly. The sequence is that of Urease accessory protein UreE from Staphylococcus carnosus (strain TM300).